The primary structure comprises 95 residues: Large ribosomal subunit protein uL23 (95 aa).

Belongs to the universal ribosomal protein uL23 family. As to quaternary structure, part of the 50S ribosomal subunit. Contacts protein L29, and trigger factor when it is bound to the ribosome.

One of the early assembly proteins it binds 23S rRNA. One of the proteins that surrounds the polypeptide exit tunnel on the outside of the ribosome. Forms the main docking site for trigger factor binding to the ribosome. The protein is Large ribosomal subunit protein uL23 of Levilactobacillus brevis (strain ATCC 367 / BCRC 12310 / CIP 105137 / JCM 1170 / LMG 11437 / NCIMB 947 / NCTC 947) (Lactobacillus brevis).